A 266-amino-acid polypeptide reads, in one-letter code: Apolipoprotein A-I (266 aa).

The N-terminal stretch at 1–18 (MKAVVLTLAVLFLTGSQA) is a signal peptide. 2 tandem repeats follow at residues 67–88 (LKLL…EQIG) and 89–110 (PVTQ…QEMN). The segment at 67–266 (LKLLDNWDSL…DEATKKLNAQ (200 aa)) is 10 X approximate tandem repeats. Methionine sulfoxide is present on methionine 109. One copy of the 3; half-length repeat lies at 111 to 121 (KDLEEVKKKVQ). 5 repeat units span residues 122 to 143 (PYLD…QKVA), 144 to 165 (PLGA…EKLS), 166 to 187 (PLGE…AQLA), 188 to 209 (PYSE…EGGG), and 210 to 231 (ATLT…EKAK). One copy of the 9; half-length repeat lies at 232–242 (PALEDLRQGLM). Repeat unit 10 spans residues 243–266 (PVLESFRASLLAAVDEATKKLNAQ).

The protein belongs to the apolipoprotein A1/A4/E family. As to quaternary structure, homodimer. Interacts with APOA1BP and CLU. Component of a sperm activating protein complex (SPAP), consisting of APOA1, an immunoglobulin heavy chain, an immunoglobulin light chain and albumin. Interacts with NDRG1. Interacts with SCGB3A2. Interacts with NAXE and YJEFN3. In terms of processing, glycosylated. Post-translationally, palmitoylated. Phosphorylation sites are present in the extracellular medium.

The protein localises to the secreted. Its function is as follows. Participates in the reverse transport of cholesterol from tissues to the liver for excretion by promoting cholesterol efflux from tissues and by acting as a cofactor for the lecithin cholesterol acyltransferase (LCAT). As part of the SPAP complex, activates spermatozoa motility. This is Apolipoprotein A-I (APOA1) from Phoca vitulina (Harbor seal).